We begin with the raw amino-acid sequence, 241 residues long: uncharacterized protein (241 aa).

This is an uncharacterized protein from Pasteurella multocida (strain Pm70).